The primary structure comprises 621 residues: Proton pump-interactor BIP131 (621 aa).

Residues 250 to 305 are a coiled coil; the sequence is IDEVKRDRQAVRDKIKVLEDQIHAVDGEIAALQDDLTAATARKDKAFEALNELRKT. Over residues 374–387 the composition is skewed to basic and acidic residues; the sequence is SRDGRMRNPDEKPI. The tract at residues 374 to 572 is disordered; it reads SRDGRMRNPD…RSTVTKTKTP (199 aa). Low complexity predominate over residues 430 to 441; it reads KAPAKAAKAKQP. A compositionally biased stretch (basic and acidic residues) spans 448-516; sequence PDVHDDEPPK…AEKKLKEKEK (69 aa). Positions 466-524 form a coiled coil; sequence EAKLKEMKRQEEIEKNKLALERKKKQAEKQAMKAAARAEKEAEKKLKEKEKKARKRSAT. A helical membrane pass occupies residues 589-609; the sequence is WGAPMAALAAALVALLGALVY.

This sequence belongs to the plant proton pump-interactor protein family. In terms of assembly, interacts with BRI1.

The protein localises to the cell membrane. Functionally, may regulate plasma membrane ATPase activity. The sequence is that of Proton pump-interactor BIP131 from Oryza sativa subsp. japonica (Rice).